The primary structure comprises 512 residues: UDP-N-acetylmuramate--L-alanine ligase (512 aa).

132-138 (GAHGKTT) contacts ATP.

It belongs to the MurCDEF family.

The protein resides in the cytoplasm. The enzyme catalyses UDP-N-acetyl-alpha-D-muramate + L-alanine + ATP = UDP-N-acetyl-alpha-D-muramoyl-L-alanine + ADP + phosphate + H(+). The protein operates within cell wall biogenesis; peptidoglycan biosynthesis. Cell wall formation. The chain is UDP-N-acetylmuramate--L-alanine ligase from Bifidobacterium longum (strain NCC 2705).